A 193-amino-acid chain; its full sequence is Xanthine phosphoribosyltransferase (193 aa).

2 residues coordinate xanthine: Leu-20 and Asn-27. 5-phospho-alpha-D-ribose 1-diphosphate is bound at residue 129-133; the sequence is ANGKA. Lys-157 serves as a coordination point for xanthine.

Belongs to the purine/pyrimidine phosphoribosyltransferase family. Xpt subfamily. As to quaternary structure, homodimer.

It localises to the cytoplasm. The enzyme catalyses XMP + diphosphate = xanthine + 5-phospho-alpha-D-ribose 1-diphosphate. Its pathway is purine metabolism; XMP biosynthesis via salvage pathway; XMP from xanthine: step 1/1. Converts the preformed base xanthine, a product of nucleic acid breakdown, to xanthosine 5'-monophosphate (XMP), so it can be reused for RNA or DNA synthesis. This chain is Xanthine phosphoribosyltransferase, found in Bifidobacterium adolescentis (strain ATCC 15703 / DSM 20083 / NCTC 11814 / E194a).